Reading from the N-terminus, the 556-residue chain is Formate--tetrahydrofolate ligase (556 aa).

65–72 (TPAGEGKT) is a binding site for ATP.

This sequence belongs to the formate--tetrahydrofolate ligase family.

The catalysed reaction is (6S)-5,6,7,8-tetrahydrofolate + formate + ATP = (6R)-10-formyltetrahydrofolate + ADP + phosphate. It participates in one-carbon metabolism; tetrahydrofolate interconversion. The sequence is that of Formate--tetrahydrofolate ligase from Agathobacter rectalis (strain ATCC 33656 / DSM 3377 / JCM 17463 / KCTC 5835 / VPI 0990) (Eubacterium rectale).